A 403-amino-acid polypeptide reads, in one-letter code: Sulfate adenylyltransferase (403 aa).

This sequence belongs to the sulfate adenylyltransferase family.

It catalyses the reaction sulfate + ATP + H(+) = adenosine 5'-phosphosulfate + diphosphate. It functions in the pathway sulfur metabolism; hydrogen sulfide biosynthesis; sulfite from sulfate: step 1/3. This chain is Sulfate adenylyltransferase, found in Pelodictyon phaeoclathratiforme (strain DSM 5477 / BU-1).